A 178-amino-acid chain; its full sequence is Large ribosomal subunit protein uL6 (178 aa).

It belongs to the universal ribosomal protein uL6 family. In terms of assembly, part of the 50S ribosomal subunit.

This protein binds to the 23S rRNA, and is important in its secondary structure. It is located near the subunit interface in the base of the L7/L12 stalk, and near the tRNA binding site of the peptidyltransferase center. The polypeptide is Large ribosomal subunit protein uL6 (Streptococcus pneumoniae serotype 19F (strain G54)).